The primary structure comprises 150 residues: Snaclec CTL-Eoc125 (150 aa).

A signal peptide spans 1-23; the sequence is MGRFISVSFGLLVVFLSLSGIGA. 3 disulfides stabilise this stretch: C27-C38, C55-C144, and C121-C136. The C-type lectin domain maps to 34-145; sequence YEGHCYKVFS…CSSTQQFICK (112 aa).

This sequence belongs to the snaclec family. In terms of assembly, heterodimer; disulfide-linked. Expressed by the venom gland.

It is found in the secreted. Interferes with one step of hemostasis (modulation of platelet aggregation, or coagulation cascade, for example). The polypeptide is Snaclec CTL-Eoc125 (Echis ocellatus (Ocellated saw-scaled viper)).